We begin with the raw amino-acid sequence, 662 residues long: UvrABC system protein B (662 aa).

The Helicase ATP-binding domain occupies 25–182; that stretch reads KGIEKREKFQ…KKLVEIQYER (158 aa). 38 to 45 provides a ligand contact to ATP; that stretch reads GVTGSGKT. Positions 91 to 114 match the Beta-hairpin motif; sequence YYDYYQPEAYVAQSDTYIEKDASI. The Helicase C-terminal domain occupies 429–595; it reads QIDDLYTSIQ…TIIKDIREVI (167 aa). A UVR domain is found at 622–657; the sequence is DKLIEKYEEEMKEAAQNLQFEKAAHLRDVIYKLKKD.

Belongs to the UvrB family. In terms of assembly, forms a heterotetramer with UvrA during the search for lesions. Interacts with UvrC in an incision complex.

Its subcellular location is the cytoplasm. The UvrABC repair system catalyzes the recognition and processing of DNA lesions. A damage recognition complex composed of 2 UvrA and 2 UvrB subunits scans DNA for abnormalities. Upon binding of the UvrA(2)B(2) complex to a putative damaged site, the DNA wraps around one UvrB monomer. DNA wrap is dependent on ATP binding by UvrB and probably causes local melting of the DNA helix, facilitating insertion of UvrB beta-hairpin between the DNA strands. Then UvrB probes one DNA strand for the presence of a lesion. If a lesion is found the UvrA subunits dissociate and the UvrB-DNA preincision complex is formed. This complex is subsequently bound by UvrC and the second UvrB is released. If no lesion is found, the DNA wraps around the other UvrB subunit that will check the other stand for damage. The sequence is that of UvrABC system protein B from Clostridium botulinum (strain Kyoto / Type A2).